The sequence spans 296 residues: CTD kinase subunit gamma (296 aa).

The interval 25–44 (RDSITSSSTTTPPSSQQKLN) is disordered. Residues 29–39 (TSSSTTTPPSS) are compositionally biased toward low complexity. T35 is subject to Phosphothreonine.

Belongs to the CTK3 family. In terms of assembly, CTDK-I consists of three subunits, CTK1, CTK2 and CTK3 (also called alpha, beta and gamma). Interacts with CTK1. Heterodimerization with CTK2 is required to protect this subunit from degradation. Post-translationally, ubiquitinated. Ubiquitination leads to degradation by the 26S proteasome pathway.

Its subcellular location is the nucleus. It is found in the nucleolus. The protein localises to the cytoplasm. Its function is as follows. Gamma subunit of the CTDK-I complex, which hyperphosphorylates the C-terminal heptapeptide repeat domain (CTD) of the largest RNA polymerase II subunit. CTDK-I phosphorylates 'Ser-5' if the CTD substrate is not phosphorylated at 'Ser-5', but will phosphorylate 'Ser-2' of a CTD substrate if 'Ser-5' is already phosphorylated. CTDK-I is also more reactive toward substrates that are prephosphorylated at 'Ser-2' or 'Ser-5' compared with an unphosphorylated CTD substrate, therefore efficiently creating doubly phosphorylated CTD repeats. Involved in RNA polymerase I transcription and RNA polymerase II transcriptional elongation, and as part of the CTDK-I complex, pre-mRNA 3'-end processing and SET2 mediated H3K36 methylation. Together with CTK2, required for CTK1 CTD kinase activation. Required for DNA damage induced transcription. Involved in the adaptation to alternative carbon sources, including galactose, glycerol and ethanol, but not raffinose. Required for the integrity of the rDNA locus. The sequence is that of CTD kinase subunit gamma (CTK3) from Saccharomyces cerevisiae (strain ATCC 204508 / S288c) (Baker's yeast).